Consider the following 581-residue polypeptide: Leucine-rich repeat transmembrane neuronal protein 3 (581 aa).

The first 30 residues, 1-30 (MGFNVIRLLSGSAVALVIAPTVLLTMLSSA), serve as a signal peptide directing secretion. The region spanning 31 to 61 (ERGCPKGCRCEGKMVYCESQKLQEIPSSISA) is the LRRNT domain. Residues 31–419 (ERGCPKGCRC…ADAEHISFHK (389 aa)) are Extracellular-facing. 10 LRR repeats span residues 63-83 (CLGL…QFKG), 86-107 (QLTW…AFNG), 110-131 (RLKE…TFRP), 134-155 (NLRN…QFRG), 158-179 (KLLS…IFQD), 182-203 (NLEL…VFAG), 206-226 (RLKE…ALFP), 230-251 (SLQN…MSWT), 254-275 (SLQR…SVFQ), and 279-300 (NLQR…ILDS). Residue Asn126 is glycosylated (N-linked (GlcNAc...) asparagine). The LRRCT domain maps to 312 to 363 (NIWECSRNICSLVNWLKSFKGLRENTIICASPKELQGVNVIDAVKNYSICGK). N-linked (GlcNAc...) asparagine glycosylation occurs at Asn357. Residues 377 to 408 (KPTFKPKLPRPKHESKPPLPPTVGATEPGPET) are disordered. The helical transmembrane segment at 420–440 (IIAGSVALFLSVLVILLVIYV) threads the bilayer. The Cytoplasmic segment spans residues 441 to 581 (SWKRYPASMK…RISDHKQQLA (141 aa)).

This sequence belongs to the LRRTM family. Expressed in neuronal tissues.

The protein localises to the cell membrane. Its subcellular location is the postsynaptic cell membrane. Its function is as follows. Exhibits a limited synaptogenic activity in vitro, restricted to excitatory presynaptic differentiation. May play a role in the development and maintenance of the vertebrate nervous system. In Homo sapiens (Human), this protein is Leucine-rich repeat transmembrane neuronal protein 3 (LRRTM3).